Here is a 151-residue protein sequence, read N- to C-terminus: Extracellular globin-4 (151 aa).

The Globin domain occupies 6 to 151 (CCSYEDRREI…LVARIAKDLP (146 aa)). A disulfide bridge links Cys7 with Cys138. His101 serves as a coordination point for heme b.

It belongs to the globin family. In terms of assembly, the extracellular hemoglobin of the earthworm consists of 12 subunits that have a hexagonal bilayer structure with a molecular weight near 3.8 million. Each one-twelfth subunit is composed primarily of disulfide linked trimers (chains A, B, and C) and monomers (chain D).

The protein localises to the secreted. In Lumbricus terrestris (Common earthworm), this protein is Extracellular globin-4.